The primary structure comprises 430 residues: Tyrosine--tRNA ligase (430 aa).

Tyrosine 32 is a binding site for L-tyrosine. Positions 37–46 (PTADSLHIGH) match the 'HIGH' region motif. 2 residues coordinate L-tyrosine: tyrosine 172 and glutamine 176. A 'KMSKS' region motif is present at residues 232-236 (KFGKT). Lysine 235 is an ATP binding site. The S4 RNA-binding domain occupies 362–429 (VKAVDLFVDN…GKKNYYLIIA (68 aa)).

The protein belongs to the class-I aminoacyl-tRNA synthetase family. TyrS type 1 subfamily. As to quaternary structure, homodimer.

Its subcellular location is the cytoplasm. It carries out the reaction tRNA(Tyr) + L-tyrosine + ATP = L-tyrosyl-tRNA(Tyr) + AMP + diphosphate + H(+). In terms of biological role, catalyzes the attachment of tyrosine to tRNA(Tyr) in a two-step reaction: tyrosine is first activated by ATP to form Tyr-AMP and then transferred to the acceptor end of tRNA(Tyr). The polypeptide is Tyrosine--tRNA ligase (Bacteroides fragilis (strain ATCC 25285 / DSM 2151 / CCUG 4856 / JCM 11019 / LMG 10263 / NCTC 9343 / Onslow / VPI 2553 / EN-2)).